The following is a 355-amino-acid chain: MKKHNFNAGPSILPREVIEDTAKAILDFNGSGLSLMEISHRAKDFQPVVDEAEALFKELLNIPEGYSVLFLGGGASMEFCMVPFNFLEKKAAYLNTGVWAKKAMKEAKGFGEVVEVASSAEATYTYIPKDYTIPADADYFHITTNNTIYGTELKEDLNSPVPMVADMSSDIFSRPIDVSKYICIYGGAQKNLAPAGVTFVIVKNDAVGKVSRYIPSMLNYQTHIDNGSMFNTPPVVPIYAALLNLRWIKAQGGVKEMERRAIEKADMLYAEIDRNKLFVGTAAKEDRSRMNICFVMAPEYKDLEADFMKFATEKGMVGIKGHRSVGGFRASCYNALPKESVQALIDCMQEFEKLH.

An L-glutamate-binding site is contributed by R41. Pyridoxal 5'-phosphate is bound by residues 75–76, W99, T147, D166, and Q189; that span reads AS. An N6-(pyridoxal phosphate)lysine modification is found at K190. 231 to 232 contributes to the pyridoxal 5'-phosphate binding site; the sequence is NT.

It belongs to the class-V pyridoxal-phosphate-dependent aminotransferase family. SerC subfamily. In terms of assembly, homodimer. Pyridoxal 5'-phosphate serves as cofactor.

The protein localises to the cytoplasm. It catalyses the reaction O-phospho-L-serine + 2-oxoglutarate = 3-phosphooxypyruvate + L-glutamate. The enzyme catalyses 4-(phosphooxy)-L-threonine + 2-oxoglutarate = (R)-3-hydroxy-2-oxo-4-phosphooxybutanoate + L-glutamate. It functions in the pathway amino-acid biosynthesis; L-serine biosynthesis; L-serine from 3-phospho-D-glycerate: step 2/3. Its pathway is cofactor biosynthesis; pyridoxine 5'-phosphate biosynthesis; pyridoxine 5'-phosphate from D-erythrose 4-phosphate: step 3/5. Its function is as follows. Catalyzes the reversible conversion of 3-phosphohydroxypyruvate to phosphoserine and of 3-hydroxy-2-oxo-4-phosphonooxybutanoate to phosphohydroxythreonine. This Bacteroides thetaiotaomicron (strain ATCC 29148 / DSM 2079 / JCM 5827 / CCUG 10774 / NCTC 10582 / VPI-5482 / E50) protein is Phosphoserine aminotransferase.